A 124-amino-acid polypeptide reads, in one-letter code: Bactoprenol-linked glucose translocase (124 aa).

4 helical membrane passes run Phe12–Ala32, Asn45–Phe65, Phe75–Leu95, and Ala96–Cys116.

Belongs to the GtrA family.

It is found in the cell membrane. The protein operates within bacterial outer membrane biogenesis; lipopolysaccharide biosynthesis. Functionally, involved in O antigen modification. Involved in the translocation of bactoprenol-linked glucose across the cytoplasmic membrane. The chain is Bactoprenol-linked glucose translocase (rfbI) from Shigella flexneri.